Here is a 343-residue protein sequence, read N- to C-terminus: Phospholipid phosphatase-related protein type 2 (343 aa).

The next 3 membrane-spanning stretches (helical) occupy residues 12–32 (FSII…VILL), 69–89 (VPPA…ILLG), and 129–149 (FLGV…AGQV). An N-linked (GlcNAc...) asparagine glycan is attached at Asn165. 3 helical membrane-spanning segments follow: residues 210 to 230 (AALC…VFRV), 239 to 259 (SLCL…VAEY), and 266 to 286 (VLAG…CVVH). Residues 290–343 (SRPPSGRRLSPWEDLGQAPTMDSPLEKNPRSAGRIRHRHGSPHPSRRTAPAVAT) are disordered. A phosphoserine mark is found at Ser299 and Ser312. Over residues 322–335 (GRIRHRHGSPHPSR) the composition is skewed to basic residues.

It belongs to the PA-phosphatase related phosphoesterase family.

It localises to the membrane. The chain is Phospholipid phosphatase-related protein type 2 from Homo sapiens (Human).